Consider the following 213-residue polypeptide: Pyridoxine/pyridoxamine 5'-phosphate oxidase 2 (213 aa).

Substrate is bound by residues arginine 9 to tyrosine 12 and lysine 67. Residues arginine 62 to lysine 67, phenylalanine 77 to threonine 78, lysine 84, and glutamine 106 contribute to the FMN site. Substrate-binding residues include tyrosine 124, arginine 128, and serine 132. FMN is bound by residues glutamine 141 to serine 142 and tryptophan 186. Arginine 192–histidine 194 contributes to the substrate binding site. Arginine 196 is an FMN binding site.

Belongs to the pyridoxamine 5'-phosphate oxidase family. As to quaternary structure, homodimer. Requires FMN as cofactor.

The catalysed reaction is pyridoxamine 5'-phosphate + O2 + H2O = pyridoxal 5'-phosphate + H2O2 + NH4(+). It carries out the reaction pyridoxine 5'-phosphate + O2 = pyridoxal 5'-phosphate + H2O2. Its pathway is cofactor metabolism; pyridoxal 5'-phosphate salvage; pyridoxal 5'-phosphate from pyridoxamine 5'-phosphate: step 1/1. The protein operates within cofactor metabolism; pyridoxal 5'-phosphate salvage; pyridoxal 5'-phosphate from pyridoxine 5'-phosphate: step 1/1. Catalyzes the oxidation of either pyridoxine 5'-phosphate (PNP) or pyridoxamine 5'-phosphate (PMP) into pyridoxal 5'-phosphate (PLP). In Hydrogenovibrio crunogenus (strain DSM 25203 / XCL-2) (Thiomicrospira crunogena), this protein is Pyridoxine/pyridoxamine 5'-phosphate oxidase 2.